Reading from the N-terminus, the 144-residue chain is Phospholipase A2 (144 aa).

A signal peptide spans 1–15 (MKFLVLAALLTAGTA). Residues 16–22 (ASGVSPT) constitute a propeptide, activation peptide. Disulfide bonds link Cys-33/Cys-99, Cys-49/Cys-144, Cys-51/Cys-67, Cys-66/Cys-127, Cys-73/Cys-120, Cys-83/Cys-113, and Cys-106/Cys-118. Ca(2+) is bound by residues Tyr-50, Gly-52, and Gly-54. Residue His-70 is part of the active site. Position 71 (Asp-71) interacts with Ca(2+). Asp-121 is an active-site residue.

It belongs to the phospholipase A2 family. Monomer or homodimer. It depends on Ca(2+) as a cofactor. Post-translationally, activated by trypsin cleavage in the duodenum. Can also be activated by thrombin or autocatalytically.

The protein resides in the secreted. It catalyses the reaction a 1,2-diacyl-sn-glycero-3-phosphocholine + H2O = a 1-acyl-sn-glycero-3-phosphocholine + a fatty acid + H(+). The enzyme catalyses 1,2-ditetradecanoyl-sn-glycero-3-phosphocholine + H2O = 1-tetradecanoyl-sn-glycero-3-phosphocholine + tetradecanoate + H(+). It carries out the reaction 1,2-dihexadecanoyl-sn-glycero-3-phosphocholine + H2O = 1-hexadecanoyl-sn-glycero-3-phosphocholine + hexadecanoate + H(+). The catalysed reaction is 1-hexadecanoyl-2-(9Z-octadecenoyl)-sn-glycero-3-phosphocholine + H2O = 1-hexadecanoyl-sn-glycero-3-phosphocholine + (9Z)-octadecenoate + H(+). It catalyses the reaction 1-hexadecanoyl-2-(5Z,8Z,11Z,14Z-eicosatetraenoyl)-sn-glycero-3-phosphocholine + H2O = 1-hexadecanoyl-sn-glycero-3-phosphocholine + (5Z,8Z,11Z,14Z)-eicosatetraenoate + H(+). The enzyme catalyses 1-hexadecanoyl-2-(9Z-octadecenoyl)-sn-glycero-3-phospho-(1'-sn-glycerol) + H2O = 1-hexadecanoyl-sn-glycero-3-phospho-(1'-sn-glycerol) + (9Z)-octadecenoate + H(+). It carries out the reaction N-hexadecanoyl-1,2-di-(9Z-octadecenoyl)-sn-glycero-3-phosphoethanolamine + H2O = N-hexadecanoyl-1-(9Z-octadecenoyl)-sn-glycero-3-phosphoethanolamine + (9Z)-octadecenoate + H(+). The catalysed reaction is 1-hexadecanoyl-2-(9Z,12Z-octadecadienoyl)-sn-glycero-3-phosphoethanolamine + H2O = 1-hexadecanoyl-sn-glycero-3-phosphoethanolamine + (9Z,12Z)-octadecadienoate + H(+). It catalyses the reaction N,1-dihexadecanoyl-2-(9Z,12Z-octadecadienoyl)-sn-glycero-3-phosphoethanolamine + H2O = N,1-dihexadecanoyl-sn-glycero-3-phosphoethanolamine + (9Z,12Z)-octadecadienoate + H(+). In terms of biological role, secretory calcium-dependent phospholipase A2 that primarily targets dietary phospholipids in the intestinal tract. Hydrolyzes the ester bond of the fatty acyl group attached at sn-2 position of phospholipids (phospholipase A2 activity) with preference for phosphatidylethanolamines and phosphatidylglycerols over phosphatidylcholines. May play a role in the biosynthesis of N-acyl ethanolamines that regulate energy metabolism and inflammation in the intestinal tract. Hydrolyzes N-acyl phosphatidylethanolamines to N-acyl lysophosphatidylethanolamines, which are further cleaved by a lysophospholipase D to release N-acyl ethanolamines. May act in an autocrine and paracrine manner. Has anti-helminth activity in a process regulated by gut microbiota. Upon helminth infection of intestinal epithelia, directly affects phosphatidylethanolamine contents in the membrane of helminth larvae, likely controlling an array of phospholipid-mediated cellular processes such as membrane fusion and cell division while providing for better immune recognition, ultimately reducing larvae integrity and infectivity. The sequence is that of Phospholipase A2 (PLA2G1B) from Oryctolagus cuniculus (Rabbit).